The primary structure comprises 66 residues: Large ribosomal subunit protein uL30 (66 aa).

Belongs to the universal ribosomal protein uL30 family. Part of the 50S ribosomal subunit.

The chain is Large ribosomal subunit protein uL30 from Brucella anthropi (strain ATCC 49188 / DSM 6882 / CCUG 24695 / JCM 21032 / LMG 3331 / NBRC 15819 / NCTC 12168 / Alc 37) (Ochrobactrum anthropi).